A 423-amino-acid polypeptide reads, in one-letter code: Diaminobutyrate--2-oxoglutarate transaminase (423 aa).

At Lys271 the chain carries N6-(pyridoxal phosphate)lysine.

Belongs to the class-III pyridoxal-phosphate-dependent aminotransferase family. Requires pyridoxal 5'-phosphate as cofactor.

It catalyses the reaction L-2,4-diaminobutanoate + 2-oxoglutarate = L-aspartate 4-semialdehyde + L-glutamate. Its pathway is amine and polyamine biosynthesis; ectoine biosynthesis; L-ectoine from L-aspartate 4-semialdehyde: step 1/3. In terms of biological role, catalyzes reversively the conversion of L-aspartate beta-semialdehyde (ASA) to L-2,4-diaminobutyrate (DABA) by transamination with L-glutamate. The chain is Diaminobutyrate--2-oxoglutarate transaminase (ectB) from Streptomyces avermitilis (strain ATCC 31267 / DSM 46492 / JCM 5070 / NBRC 14893 / NCIMB 12804 / NRRL 8165 / MA-4680).